We begin with the raw amino-acid sequence, 469 residues long: 3-isopropylmalate dehydratase large subunit (469 aa).

Residues cysteine 349, cysteine 410, and cysteine 413 each coordinate [4Fe-4S] cluster.

Belongs to the aconitase/IPM isomerase family. LeuC type 1 subfamily. Heterodimer of LeuC and LeuD. The cofactor is [4Fe-4S] cluster.

The enzyme catalyses (2R,3S)-3-isopropylmalate = (2S)-2-isopropylmalate. It participates in amino-acid biosynthesis; L-leucine biosynthesis; L-leucine from 3-methyl-2-oxobutanoate: step 2/4. In terms of biological role, catalyzes the isomerization between 2-isopropylmalate and 3-isopropylmalate, via the formation of 2-isopropylmaleate. This Azoarcus sp. (strain BH72) protein is 3-isopropylmalate dehydratase large subunit.